Reading from the N-terminus, the 377-residue chain is METFVYLLFMVAVGALIGGVTNFIAIVMLFRPYEPMYVFGKRLPFTPGLIPKRRRELAEQLGKTVVEHLVTPEGLRRKLMDPSFTAEMAEWGREWLRKWLARKETPAELLERLGIRSPAERLEAMAAEQAERAYERWSETWRLRPIRDVLPAELKQTMEARVESLAGYLADRTLDYFRSEEGKQQISSMIERFFQERGMVGNMLQMLLGNVNFVDKVQAELGKFLRHAGTREVLSRLLWTEWNKWLDYPLATVEEMIGRRRIDEAVRSAARRLVQSGSWLHRPLDELIAPYEQPLFDRLIPQAAATVSCLLSDKIEAIVAQLGLADIVRDQVESFSLRRLEAIILSIARRELKMITYLGALLGGLIGAVQGVIGLWL.

2 consecutive transmembrane segments (helical) span residues 7 to 27 and 357 to 377; these read LLFMVAVGALIGGVTNFIAIV and YLGALLGGLIGAVQGVIGLWL.

Belongs to the UPF0754 family.

It is found in the cell membrane. In Geobacillus kaustophilus (strain HTA426), this protein is UPF0754 membrane protein GK0639.